Reading from the N-terminus, the 132-residue chain is Small ribosomal subunit protein uS8 (132 aa).

The protein belongs to the universal ribosomal protein uS8 family. As to quaternary structure, part of the 30S ribosomal subunit. Contacts proteins S5 and S12.

Functionally, one of the primary rRNA binding proteins, it binds directly to 16S rRNA central domain where it helps coordinate assembly of the platform of the 30S subunit. The polypeptide is Small ribosomal subunit protein uS8 (Cereibacter sphaeroides (strain ATCC 17029 / ATH 2.4.9) (Rhodobacter sphaeroides)).